A 149-amino-acid polypeptide reads, in one-letter code: 3-dehydroquinate dehydratase (149 aa).

Catalysis depends on Y24, which acts as the Proton acceptor. Substrate-binding residues include N75, H81, and D88. The active-site Proton donor is the H101. Substrate-binding positions include 102-103 (IS) and R112.

Belongs to the type-II 3-dehydroquinase family. Homododecamer.

The catalysed reaction is 3-dehydroquinate = 3-dehydroshikimate + H2O. It functions in the pathway metabolic intermediate biosynthesis; chorismate biosynthesis; chorismate from D-erythrose 4-phosphate and phosphoenolpyruvate: step 3/7. In terms of biological role, catalyzes a trans-dehydration via an enolate intermediate. The polypeptide is 3-dehydroquinate dehydratase (Methylobacterium radiotolerans (strain ATCC 27329 / DSM 1819 / JCM 2831 / NBRC 15690 / NCIMB 10815 / 0-1)).